The following is a 2904-amino-acid chain: Protein eyes shut homolog (2904 aa).

Positions 1–23 (MRNPKLAIIVFLLSCVIYGPVYS) are cleaved as a signal peptide. N-linked (GlcNAc...) asparagine glycans are attached at residues Asn-41 and Asn-135. 4 EGF-like domains span residues 174–216 (KPQL…RYCE), 217–259 (NVDG…VNCS), 263–298 (GNQN…TYCE), and 300–336 (KRLF…LNCE). Intrachain disulfides connect Cys-178–Cys-193, Cys-187–Cys-204, Cys-206–Cys-215, Cys-221–Cys-232, Cys-226–Cys-247, and Cys-249–Cys-258. N-linked (GlcNAc...) asparagine glycosylation is found at Asn-257 and Asn-266. 6 cysteine pairs are disulfide-bonded: Cys-267/Cys-276, Cys-271/Cys-286, Cys-288/Cys-297, Cys-304/Cys-315, Cys-309/Cys-324, and Cys-326/Cys-335. Asn-362 carries N-linked (GlcNAc...) asparagine glycosylation. EGF-like domains follow at residues 375–411 (QAEV…KNCE), 413–451 (IIDF…EFCQ), and 453–496 (LENA…PYCE). Intrachain disulfides connect Cys-379/Cys-390, Cys-384/Cys-399, Cys-401/Cys-410, Cys-417/Cys-430, Cys-424/Cys-439, Cys-441/Cys-450, Cys-457/Cys-470, Cys-464/Cys-484, Cys-486/Cys-495, Cys-502/Cys-513, Cys-507/Cys-522, and Cys-524/Cys-533. An EGF-like 8; calcium-binding domain is found at 498 to 534 (EVNECDSSPCQHQGTCTDFVGYYKCTCPSGYTGIDCE). N-linked (GlcNAc...) asparagine glycosylation is present at Asn-544. An EGF-like 9 domain is found at 565–603 (HTPCPHYLQPCANGGHCVLHNITSYSCVCAPGWTGATCL). Cystine bridges form between Cys-568/Cys-581, Cys-575/Cys-591, Cys-593/Cys-602, Cys-609/Cys-620, Cys-614/Cys-629, Cys-631/Cys-640, Cys-645/Cys-656, Cys-650/Cys-665, Cys-667/Cys-676, Cys-683/Cys-694, Cys-688/Cys-703, Cys-705/Cys-714, Cys-721/Cys-732, Cys-726/Cys-741, Cys-743/Cys-752, Cys-759/Cys-772, Cys-764/Cys-781, Cys-783/Cys-792, Cys-799/Cys-810, Cys-804/Cys-819, Cys-821/Cys-830, Cys-837/Cys-848, Cys-842/Cys-857, Cys-859/Cys-868, Cys-875/Cys-886, Cys-880/Cys-895, Cys-897/Cys-906, Cys-913/Cys-924, Cys-918/Cys-933, Cys-935/Cys-944, Cys-951/Cys-962, Cys-956/Cys-971, Cys-973/Cys-982, Cys-987/Cys-999, Cys-993/Cys-1014, Cys-1016/Cys-1025, Cys-1032/Cys-1042, Cys-1037/Cys-1051, Cys-1053/Cys-1062, Cys-1069/Cys-1080, Cys-1074/Cys-1089, Cys-1091/Cys-1100, Cys-1107/Cys-1118, Cys-1112/Cys-1127, Cys-1129/Cys-1138, Cys-1145/Cys-1156, Cys-1150/Cys-1167, Cys-1169/Cys-1178, Cys-1185/Cys-1198, Cys-1192/Cys-1208, Cys-1210/Cys-1219, Cys-1226/Cys-1237, Cys-1231/Cys-1246, Cys-1248/Cys-1257, Cys-1264/Cys-1275, Cys-1269/Cys-1284, Cys-1286/Cys-1295, Cys-1302/Cys-1313, Cys-1307/Cys-1322, Cys-1324/Cys-1333, Cys-1340/Cys-1351, Cys-1345/Cys-1360, Cys-1362/Cys-1371, Cys-1378/Cys-1388, Cys-1383/Cys-1397, Cys-1399/Cys-1408, Cys-1415/Cys-1426, Cys-1420/Cys-1435, Cys-1437/Cys-1446, Cys-1453/Cys-1469, Cys-1463/Cys-1479, Cys-1481/Cys-1490, Cys-1497/Cys-1508, Cys-1502/Cys-1517, Cys-1519/Cys-1528, Cys-1535/Cys-1545, Cys-1540/Cys-1556, and Cys-1558/Cys-1567. Residue Asn-585 is glycosylated (N-linked (GlcNAc...) asparagine). One can recognise an EGF-like 10; calcium-binding domain in the interval 605–641 (NINECVQHRCQNRATCVDEVGGYSCLCGHGYTGVHCE). The EGF-like 11 domain maps to 642–677 (LDFCSGHQCSEHAVCVDQQHNYTCRCMLGYEGTLCE). Asn-662 carries an N-linked (GlcNAc...) asparagine glycan. The region spanning 679 to 715 (ETDECKSAPCTNNATCIDLVAGYQCLCAPGFKGRTCS) is the EGF-like 12; calcium-binding domain. Asn-691 is a glycosylation site (N-linked (GlcNAc...) asparagine). EGF-like domains lie at 717–753 (SMNE…HDCS), 755–793 (PATG…LFCE), and 795–831 (SINH…RLCE). The region spanning 833–869 (NIDDCLDKPCGALSICKDGINAYDCFCAPGFVGNNCE) is the EGF-like 16; calcium-binding domain. Positions 871-907 (EVNECLSQPCQNGASCSDELNSFSCLCLAGTTGSLCE) constitute an EGF-like 17; calcium-binding domain. The 37-residue stretch at 909–945 (NIDECQSSPCMNNGTCLDLSDGFKCICPSGFSGPECS) folds into the EGF-like 18; calcium-binding domain. N-linked (GlcNAc...) asparagine glycosylation is present at Asn-921. In terms of domain architecture, EGF-like 19; calcium-binding spans 947 to 983 (DINECVSYPCKNGGSCIDQPGNYYCRCLAPFKGLNCE). The EGF-like 20 domain occupies 984–1026 (LLPCEAVNPCDNGAECVEEADLVLFPLGFQCRCRKGFTGPRCE). One can recognise an EGF-like 21; calcium-binding domain in the interval 1028–1063 (NIDECSSNPCLNGFCYDAVDGFYCLCNPGYAGVRCE). The EGF-like 22 domain maps to 1065–1101 (HINDCASNMCENNSTCVDLHLSYNCLCLPGWEGEYCQ). N-linked (GlcNAc...) asparagine glycosylation occurs at Asn-1077. The EGF-like 23; calcium-binding domain maps to 1103-1139 (ETNECLSNPCKNNATCTDLLNAYRCVCPQGWTGLDCD). Asn-1115 carries an N-linked (GlcNAc...) asparagine glycan. EGF-like domains follow at residues 1141-1179 (DVKE…PLCE) and 1181-1220 (PYDP…TRCE). An N-linked (GlcNAc...) asparagine glycan is attached at Asn-1195. The 37-residue stretch at 1222–1258 (DSDDCVSRPCQNRGICVDGVNSYSCFCEPGFSGLHCE) folds into the EGF-like 26; calcium-binding domain. An EGF-like 27; calcium-binding domain is found at 1260-1296 (DINECASNPCQNQAVCQDLVNGFQCSCVPGYFGPHCN). An EGF-like 28; calcium-binding domain is found at 1298–1334 (DVNECDSSPCLHESVCINKPGGFACVCSAGFSGKWCE). The region spanning 1336–1372 (NVDECKSNPCRNNGSCIDGLNGYQCVCSRGFMGDHCE) is the EGF-like 29; calcium-binding domain. A glycan (N-linked (GlcNAc...) asparagine) is linked at Asn-1348. The region spanning 1374 to 1409 (NTDECSSGPCVHGSCLDEIDAFSCQCEVGWTGHRCQ) is the EGF-like 30; calcium-binding domain. The EGF-like 31; calcium-binding domain maps to 1411–1447 (NINECEAHPCLNGGSCVDLLDKYACICADGFTGKNCD). Positions 1449–1491 (DQNVCLQTSLNFSLCFNGGTCVDGPGVNFTCSCRPGFMGDFCE) constitute an EGF-like 32 domain. N-linked (GlcNAc...) asparagine glycosylation is found at Asn-1459 and Asn-1476. In terms of domain architecture, EGF-like 33; calcium-binding spans 1493–1529 (EMNECCSEPCFNGAICQDLINGYQCHCRPGWTGLHCE). Residues 1531–1568 (DINECLLQPCNQGMCIQNEPGHGYTCFCRPGFVGENCE) form the EGF-like 34 domain. N-linked (GlcNAc...) asparagine glycans are attached at residues Asn-1591, Asn-1755, and Asn-1788. The Laminin G-like 1 domain maps to 1640–1818 (ASFGGYSGNS…AIARNNVDNC (179 aa)). Cystine bridges form between Cys-1792-Cys-1818, Cys-1860-Cys-1871, Cys-1865-Cys-1885, and Cys-1887-Cys-1896. Residues 1856–1897 (PAPVCPQGICLNGGTCRPVSLPSGASSFFCDCPLHFTGRLCE) enclose the EGF-like 35 domain. Residues 1902-2102 (VFSPRFDGNS…NIQNCDAAVC (201 aa)) enclose the Laminin G-like 2 domain. N-linked (GlcNAc...) asparagine glycans are attached at residues Asn-2025 and Asn-2064. Intrachain disulfides connect Cys-2071/Cys-2102, Cys-2102/Cys-2113, Cys-2107/Cys-2122, Cys-2124/Cys-2133, Cys-2138/Cys-2149, Cys-2143/Cys-2159, and Cys-2161/Cys-2170. EGF-like domains are found at residues 2098–2134 (DAAV…KLCQ) and 2135–2171 (FTAC…LLCD). Residues Asn-2175 and Asn-2216 are each glycosylated (N-linked (GlcNAc...) asparagine). The Laminin G-like 3 domain occupies 2182–2372 (SGLDEFGYSS…PLSGRNVGQC (191 aa)). Cystine bridges form between Cys-2339-Cys-2372, Cys-2377-Cys-2388, Cys-2382-Cys-2397, Cys-2399-Cys-2408, Cys-2415-Cys-2431, Cys-2425-Cys-2440, and Cys-2442-Cys-2451. 2 EGF-like domains span residues 2373–2409 (GVNP…ALCS) and 2411–2452 (KVSF…LHCQ). The Laminin G-like 4 domain occupies 2459-2642 (DPFFSGNQSS…NVGDWDGTAC (184 aa)). N-linked (GlcNAc...) asparagine glycosylation is found at Asn-2465, Asn-2528, and Asn-2570. 2 EGF-like domains span residues 2638 to 2675 (DGTA…SRCQ) and 2676 to 2714 (QSIQ…THCD). Intrachain disulfides connect Cys-2642/Cys-2653, Cys-2647/Cys-2663, Cys-2665/Cys-2674, Cys-2680/Cys-2691, Cys-2685/Cys-2702, and Cys-2704/Cys-2713. An N-linked (GlcNAc...) asparagine glycan is attached at Asn-2694. The Laminin G-like 5 domain occupies 2719 to 2894 (LKTIRFIGNS…TKQLQFLQTC (176 aa)). N-linked (GlcNAc...) asparagine glycosylation is found at Asn-2750 and Asn-2816.

This sequence belongs to the EYS family. In terms of tissue distribution, expressed in retina where it localizes between the retinal pigment epithelium and the outer nuclear layer (at protein level).

The protein resides in the cell projection. It localises to the cilium. The protein localises to the cytoplasm. It is found in the cytoskeleton. Its subcellular location is the cilium axoneme. The protein resides in the secreted. It localises to the extracellular space. The protein localises to the extracellular matrix. It is found in the interphotoreceptor matrix. Functionally, required to maintain the integrity of photoreceptor cells. Specifically required for normal morphology of the photoreceptor ciliary pocket, and might thus facilitate protein trafficking between the photoreceptor inner and outer segments via the transition zone. This chain is Protein eyes shut homolog, found in Danio rerio (Zebrafish).